A 359-amino-acid chain; its full sequence is 1-deoxy-D-xylulose 5-phosphate reductoisomerase (359 aa).

NADPH contacts are provided by T12, G13, S14, I15, K38, and N39. 1-deoxy-D-xylulose 5-phosphate is bound at residue K105. E106 contributes to the NADPH binding site. D130 provides a ligand contact to Mn(2+). 4 residues coordinate 1-deoxy-D-xylulose 5-phosphate: S131, E132, S152, and H175. E132 is a Mn(2+) binding site. An NADPH-binding site is contributed by G181. Positions 188, 193, 194, and 197 each coordinate 1-deoxy-D-xylulose 5-phosphate. Mn(2+) is bound at residue E197.

This sequence belongs to the DXR family. The cofactor is Mg(2+). Mn(2+) serves as cofactor.

It catalyses the reaction 2-C-methyl-D-erythritol 4-phosphate + NADP(+) = 1-deoxy-D-xylulose 5-phosphate + NADPH + H(+). The protein operates within isoprenoid biosynthesis; isopentenyl diphosphate biosynthesis via DXP pathway; isopentenyl diphosphate from 1-deoxy-D-xylulose 5-phosphate: step 1/6. Catalyzes the NADPH-dependent rearrangement and reduction of 1-deoxy-D-xylulose-5-phosphate (DXP) to 2-C-methyl-D-erythritol 4-phosphate (MEP). This chain is 1-deoxy-D-xylulose 5-phosphate reductoisomerase, found in Pseudothermotoga lettingae (strain ATCC BAA-301 / DSM 14385 / NBRC 107922 / TMO) (Thermotoga lettingae).